We begin with the raw amino-acid sequence, 415 residues long: Histidine--tRNA ligase (415 aa).

It belongs to the class-II aminoacyl-tRNA synthetase family. In terms of assembly, homodimer.

It localises to the cytoplasm. The enzyme catalyses tRNA(His) + L-histidine + ATP = L-histidyl-tRNA(His) + AMP + diphosphate + H(+). In Rickettsia akari (strain Hartford), this protein is Histidine--tRNA ligase.